The sequence spans 133 residues: Glutaredoxin-C4, chloroplastic (133 aa).

Over residues 1–13 (MGMAQSSSSSSRP) the composition is skewed to low complexity. The segment at 1-25 (MGMAQSSSSSSRPSDSEQLEEPSKP) is disordered. A chloroplast-targeting transit peptide spans 1–27 (MGMAQSSSSSSRPSDSEQLEEPSKPVM). The Glutaredoxin domain occupies 29–129 (LDKAKEIVAS…PLLTEAGAIA (101 aa)). A disulfide bond links Cys-49 and Cys-52.

It belongs to the glutaredoxin family. CPYC subfamily.

Its subcellular location is the plastid. It is found in the chloroplast. In terms of biological role, has a glutathione-disulfide oxidoreductase activity in the presence of NADPH and glutathione reductase. Reduces low molecular weight disulfides and proteins. This is Glutaredoxin-C4, chloroplastic (GRXC4) from Oryza sativa subsp. japonica (Rice).